A 1396-amino-acid chain; its full sequence is ATP-dependent helicase/nuclease subunit A (1396 aa).

Positions 1-25 (MNREALCHDDPIGHDRLRPDSIPRD) are disordered. The region spanning 26–532 (PKWTDEQWQA…IDLAKNFRSR (507 aa)) is the UvrD-like helicase ATP-binding domain. ATP is bound at residue 47-54 (AAAGAGKT). Disordered stretches follow at residues 590 to 649 (DADG…GQPT) and 1171 to 1205 (HSPE…PSPD). In terms of domain architecture, UvrD-like helicase C-terminal spans 615–920 (HKNIAKAGES…RIMSIHKSKG (306 aa)). Low complexity predominate over residues 1181–1199 (TPPSLEIPPSLETPPSLET).

This sequence belongs to the helicase family. AddA subfamily. As to quaternary structure, heterodimer of AddA and AddB/RexB. Mg(2+) serves as cofactor.

The catalysed reaction is Couples ATP hydrolysis with the unwinding of duplex DNA by translocating in the 3'-5' direction.. It carries out the reaction ATP + H2O = ADP + phosphate + H(+). Functionally, the heterodimer acts as both an ATP-dependent DNA helicase and an ATP-dependent, dual-direction single-stranded exonuclease. Recognizes the chi site generating a DNA molecule suitable for the initiation of homologous recombination. The AddA nuclease domain is required for chi fragment generation; this subunit has the helicase and 3' -&gt; 5' nuclease activities. The chain is ATP-dependent helicase/nuclease subunit A from Heliobacterium modesticaldum (strain ATCC 51547 / Ice1).